The following is a 174-amino-acid chain: Adenylosuccinate synthetase (174 aa).

GTP-binding positions include 13 to 19 and 41 to 43; these read GDEGKGK and GHT. The active-site Proton acceptor is the aspartate 14. Positions 14 and 41 each coordinate Mg(2+). IMP-binding positions include 14 to 17, 39 to 42, threonine 130, and arginine 144; these read DEGK and NAGH. Histidine 42 (proton donor) is an active-site residue.

This sequence belongs to the adenylosuccinate synthetase family. Homodimer. The cofactor is Mg(2+).

The protein localises to the cytoplasm. The enzyme catalyses IMP + L-aspartate + GTP = N(6)-(1,2-dicarboxyethyl)-AMP + GDP + phosphate + 2 H(+). Its pathway is purine metabolism; AMP biosynthesis via de novo pathway; AMP from IMP: step 1/2. In terms of biological role, plays an important role in the de novo pathway of purine nucleotide biosynthesis. Catalyzes the first committed step in the biosynthesis of AMP from IMP. This chain is Adenylosuccinate synthetase, found in Stutzerimonas stutzeri (Pseudomonas stutzeri).